The following is a 256-amino-acid chain: Diacetyl reductase [(S)-acetoin forming] (256 aa).

NAD(+)-binding positions include 6 to 33 and aspartate 59; that span reads LVTGAGQGIGKAIALRLVKDGFAVAIAD. Serine 139 lines the substrate pocket. Tyrosine 152 functions as the Proton acceptor in the catalytic mechanism. Lysine 156 contributes to the NAD(+) binding site.

It belongs to the short-chain dehydrogenases/reductases (SDR) family. Homotetramer.

It carries out the reaction (S)-acetoin + NAD(+) = diacetyl + NADH + H(+). Catalyzes the reversible reduction of (S)-acetoin to 2,3-butanediol in the presence of NADH. The chain is Diacetyl reductase [(S)-acetoin forming] (budC) from Klebsiella pneumoniae.